Consider the following 291-residue polypeptide: Phosphate-binding protein PstS 2 (291 aa).

The first 21 residues, 1 to 21, serve as a signal peptide directing secretion; sequence MKFKKMLTLAAIGLSGFGLVA. C22 carries the N-palmitoyl cysteine lipid modification. A lipid anchor (S-diacylglycerol cysteine) is attached at C22.

Belongs to the PstS family. The complex is composed of two ATP-binding proteins (PstB), two transmembrane proteins (PstC and PstA) and a solute-binding protein (PstS).

The protein resides in the cell membrane. Its function is as follows. Part of the ABC transporter complex PstSACB involved in phosphate import. The protein is Phosphate-binding protein PstS 2 (pstS2) of Streptococcus pneumoniae serotype 4 (strain ATCC BAA-334 / TIGR4).